The primary structure comprises 157 residues: Ribosome maturation factor RimP (157 aa).

It belongs to the RimP family.

It is found in the cytoplasm. Its function is as follows. Required for maturation of 30S ribosomal subunits. This chain is Ribosome maturation factor RimP, found in Helicobacter hepaticus (strain ATCC 51449 / 3B1).